We begin with the raw amino-acid sequence, 168 residues long: Cell division inhibitor SulA (168 aa).

A ftsZ binding region spans residues 106–112 (ALLTGNY). The lon protease binding stretch occupies residues 161-168 (KIHSYLYH).

It belongs to the SulA family. In terms of assembly, interacts with FtsZ. Post-translationally, is rapidly cleaved and degraded by the Lon protease once DNA damage is repaired.

Functionally, component of the SOS system and an inhibitor of cell division. Accumulation of SulA causes rapid cessation of cell division and the appearance of long, non-septate filaments. In the presence of GTP, binds a polymerization-competent form of FtsZ in a 1:1 ratio, thus inhibiting FtsZ polymerization and therefore preventing it from participating in the assembly of the Z ring. This mechanism prevents the premature segregation of damaged DNA to daughter cells during cell division. The polypeptide is Cell division inhibitor SulA (Yersinia pestis bv. Antiqua (strain Antiqua)).